The following is a 251-amino-acid chain: Protein PBMUCL2 (251 aa).

The signal sequence occupies residues 1-22 (MPRYVPLLLLLLLLRCSERGGG). 2 disordered regions span residues 36 to 55 (WRDG…DRAS) and 65 to 251 (LSQS…THLL). Over residues 72–87 (KHPETSPKDSRIREND) the composition is skewed to basic and acidic residues. N120 is a glycosylation site (N-linked (GlcNAc...) asparagine). Residues 150–164 (TKDSVTADPGTTENF) are compositionally biased toward polar residues. A 15 X 11 AA approximate repeats region spans residues 153-251 (SVTADPGTTE…TTKHGDTHLL (99 aa)). The segment covering 241–251 (ETTKHGDTHLL) has biased composition (basic and acidic residues).

Detected in the brain, lung, spleen, thymus and prostate.

The protein localises to the secreted. The chain is Protein PBMUCL2 (HCG22) from Homo sapiens (Human).